Here is a 115-residue protein sequence, read N- to C-terminus: Small ribosomal subunit protein uS13 (115 aa).

The segment at 92–115 (RRGLPVRGQNTKNNARTRKGSKRK) is disordered. Over residues 106 to 115 (ARTRKGSKRK) the composition is skewed to basic residues.

The protein belongs to the universal ribosomal protein uS13 family. In terms of assembly, part of the 30S ribosomal subunit. Forms a loose heterodimer with protein S19. Forms two bridges to the 50S subunit in the 70S ribosome.

In terms of biological role, located at the top of the head of the 30S subunit, it contacts several helices of the 16S rRNA. In the 70S ribosome it contacts the 23S rRNA (bridge B1a) and protein L5 of the 50S subunit (bridge B1b), connecting the 2 subunits; these bridges are implicated in subunit movement. Contacts the tRNAs in the A and P-sites. This chain is Small ribosomal subunit protein uS13, found in Lactobacillus gasseri (strain ATCC 33323 / DSM 20243 / BCRC 14619 / CIP 102991 / JCM 1131 / KCTC 3163 / NCIMB 11718 / NCTC 13722 / AM63).